We begin with the raw amino-acid sequence, 79 residues long: Hematopoietic cell signal transducer (79 aa).

A signal peptide spans 1–18 (MIHPGHILFLLLLPVAAA). Topologically, residues 19–34 (QTTPGSCSGCGSLSLP) are extracellular. A helical membrane pass occupies residues 35–55 (LLAGLVAADAVASPLIVGAVF). The Cytoplasmic segment spans residues 56–79 (LCARPRRSPAQGDGKVYINMPGRG). Position 72 is a phosphotyrosine (Tyr72). A GRB2 binding site region spans residues 72-74 (YIN). Residues 72 to 75 (YINM) are PIK3R1 binding site.

This sequence belongs to the DAP10 family. As to quaternary structure, homodimer; Disulfide-linked. Heterohexamer composed of four subunits of HCST/DAP10 and two subunits of KLRK1. Interacts (via transmembrane domain) with KLRK1 (via transmembrane domain); the interaction is required for KLRK1 NK cell surface and induces NK cell-mediated cytotoxicity. Interacts with PIK3R1 and GRB2. Interacts with CLEC5A. Forms an CLEC5A/TYROBP/HCST trimolecular complex depending almost solely on TYROBP. Interacts with CD300H. In terms of processing, phosphorylated; PIK3R1 and GRB2 associate specifically with tyrosine-phosphorylated HCST. Post-translationally, O-glycosylated.

The protein resides in the membrane. Its function is as follows. Transmembrane adapter protein which associates with KLRK1 to form an activation receptor KLRK1-HCST in lymphoid and myeloid cells; this receptor plays a major role in triggering cytotoxicity against target cells expressing cell surface ligands such as MHC class I chain-related MICA and MICB, and UL16-binding proteins (ULBPs); these ligands are up-regulated by stress conditions and pathological state such as viral infection and tumor transformation. Functions as a docking site for PI3-kinase PIK3R1 and GRB2. Interaction of ULBPs with KLRK1-HCST triggers calcium mobilization and activation of the PIK3R1, MAP2K/ERK, and JAK2/STAT5 signaling pathways. Both PIK3R1 and GRB2 are required for full KLRK1-HCST-mediated activation and ultimate killing of target cells. In NK cells, KLRK1-HCST signaling directly induces cytotoxicity and enhances cytokine production initiated via DAP12/TYROBP-associated receptors. In T-cells, it provides primarily costimulation for TCR-induced signals. KLRK1-HCST receptor plays a role in immune surveillance against tumors and is required for cytolysis of tumors cells; indeed, melanoma cells that do not express KLRK1 ligands escape from immune surveillance mediated by NK cells. In Macaca mulatta (Rhesus macaque), this protein is Hematopoietic cell signal transducer (HCST).